The sequence spans 296 residues: NAD kinase (296 aa).

Aspartate 72 (proton acceptor) is an active-site residue. NAD(+)-binding positions include 72–73 (DG), 146–147 (ND), arginine 157, lysine 174, aspartate 176, 187–192 (TAYALS), and glutamine 247.

The protein belongs to the NAD kinase family. A divalent metal cation is required as a cofactor.

It localises to the cytoplasm. It carries out the reaction NAD(+) + ATP = ADP + NADP(+) + H(+). In terms of biological role, involved in the regulation of the intracellular balance of NAD and NADP, and is a key enzyme in the biosynthesis of NADP. Catalyzes specifically the phosphorylation on 2'-hydroxyl of the adenosine moiety of NAD to yield NADP. This Pseudomonas fluorescens (strain SBW25) protein is NAD kinase.